The primary structure comprises 325 residues: Metacaspase-9 (325 aa).

Active-site residues include His-95 and Cys-147. Cys-147 is subject to S-nitrosocysteine. An N-linked (GlcNAc...) asparagine glycan is attached at Asn-177.

Belongs to the peptidase C14B family. In terms of processing, the two subunits are derived from the precursor sequence by an autocatalytic mechanism. S-nitrosylation at Cys-147 suppresses both autoprocessing and proteolytic activity of the full-length protein, but does not affect the activity of the mature processed form. As to expression, expressed in root tips, cauline leaves, flowers and siliques.

The protein localises to the secreted. Its subcellular location is the extracellular space. The protein resides in the apoplast. Its activity is regulated as follows. Inhibited by serpin ZX and nitric oxide through cysteine nitrosylation. Functionally, cysteine protease that cleaves specifically after arginine or lysine residues. Does not cleave caspase-specific substrates. Required for proteolytic processing of GRI. The chain is Metacaspase-9 (AMC9) from Arabidopsis thaliana (Mouse-ear cress).